The chain runs to 334 residues: Glycerol-3-phosphate dehydrogenase [NAD(P)+] 2 (334 aa).

4 residues coordinate NADPH: Trp16, Arg36, Arg37, and Lys110. Sn-glycerol 3-phosphate is bound by residues Lys110 and Gly140. Ala144 is a binding site for NADPH. Positions 195, 248, 258, 259, and 260 each coordinate sn-glycerol 3-phosphate. The active-site Proton acceptor is the Lys195. NADPH is bound at residue Arg259. 2 residues coordinate NADPH: Val282 and Glu284.

The protein belongs to the NAD-dependent glycerol-3-phosphate dehydrogenase family.

It is found in the cytoplasm. It catalyses the reaction sn-glycerol 3-phosphate + NAD(+) = dihydroxyacetone phosphate + NADH + H(+). The catalysed reaction is sn-glycerol 3-phosphate + NADP(+) = dihydroxyacetone phosphate + NADPH + H(+). It functions in the pathway membrane lipid metabolism; glycerophospholipid metabolism. Functionally, catalyzes the reduction of the glycolytic intermediate dihydroxyacetone phosphate (DHAP) to sn-glycerol 3-phosphate (G3P), the key precursor for phospholipid synthesis. In Mycobacterium bovis (strain ATCC BAA-935 / AF2122/97), this protein is Glycerol-3-phosphate dehydrogenase [NAD(P)+] 2.